The primary structure comprises 415 residues: Gamma-glutamyl phosphate reductase (415 aa).

Belongs to the gamma-glutamyl phosphate reductase family.

Its subcellular location is the cytoplasm. It catalyses the reaction L-glutamate 5-semialdehyde + phosphate + NADP(+) = L-glutamyl 5-phosphate + NADPH + H(+). It participates in amino-acid biosynthesis; L-proline biosynthesis; L-glutamate 5-semialdehyde from L-glutamate: step 2/2. Catalyzes the NADPH-dependent reduction of L-glutamate 5-phosphate into L-glutamate 5-semialdehyde and phosphate. The product spontaneously undergoes cyclization to form 1-pyrroline-5-carboxylate. The polypeptide is Gamma-glutamyl phosphate reductase (Dictyoglomus turgidum (strain DSM 6724 / Z-1310)).